The following is a 192-amino-acid chain: Ribosomal RNA small subunit methyltransferase G (192 aa).

Residues G63, L68, 112–113 (IE), and R125 contribute to the S-adenosyl-L-methionine site.

This sequence belongs to the methyltransferase superfamily. RNA methyltransferase RsmG family.

Its subcellular location is the cytoplasm. The enzyme catalyses guanosine(527) in 16S rRNA + S-adenosyl-L-methionine = N(7)-methylguanosine(527) in 16S rRNA + S-adenosyl-L-homocysteine. In terms of biological role, specifically methylates the N7 position of guanine in position 527 of 16S rRNA. This chain is Ribosomal RNA small subunit methyltransferase G, found in Rickettsia rickettsii (strain Iowa).